The primary structure comprises 178 residues: Probable chorismate pyruvate-lyase (178 aa).

Residues M37, R78, L114, and E165 each contribute to the substrate site.

The protein belongs to the UbiC family.

The protein resides in the cytoplasm. It catalyses the reaction chorismate = 4-hydroxybenzoate + pyruvate. Its pathway is cofactor biosynthesis; ubiquinone biosynthesis. Its function is as follows. Removes the pyruvyl group from chorismate, with concomitant aromatization of the ring, to provide 4-hydroxybenzoate (4HB) for the ubiquinone pathway. This Aeromonas salmonicida (strain A449) protein is Probable chorismate pyruvate-lyase.